The following is a 377-amino-acid chain: Nucleoside diphosphate kinase homolog 7 (377 aa).

The region spanning 3–91 is the DM10 domain; it reads HSERFVFIAE…YTARQLGSKK (89 aa).

The protein belongs to the NDK family. As to quaternary structure, component of sperm flagellar doublet microtubules. Component of the gamma-tubulin ring complex. Expressed in trachea multiciliated cells.

The protein localises to the cytoplasm. It localises to the cytoskeleton. It is found in the microtubule organizing center. Its subcellular location is the centrosome. The protein resides in the nucleus. The protein localises to the spindle. It localises to the cilium axoneme. It is found in the flagellum axoneme. Its subcellular location is the cell projection. The protein resides in the cilium. In terms of biological role, possesses an intrinsic kinase activity. Displays 3'-5' exonuclease activity with a preference for single-stranded DNA. Does not seem to have nucleoside diphosphate kinase activity. Functional component of the gamma-tubulin ring complex, implicated in the regulation of the microtubule-nucleating activity of the gamma-tubulin ring complex in centrosomes, in a kinase activity-dependent manner. Part of the dynein-decorated doublet microtubules (DMTs) in cilia axoneme, which is required for motile cilia beating. In Bos taurus (Bovine), this protein is Nucleoside diphosphate kinase homolog 7 (NME7).